A 296-amino-acid polypeptide reads, in one-letter code: Small ribosomal subunit protein uS2m (296 aa).

The segment at 274-296 (QGQKEPGDQGPAHPPGADMSHSL) is disordered.

Belongs to the universal ribosomal protein uS2 family. In terms of assembly, component of the mitochondrial small ribosomal subunit (mt-SSU). Mature mammalian 55S mitochondrial ribosomes consist of a small (28S) and a large (39S) subunit. The 28S small subunit contains a 12S ribosomal RNA (12S mt-rRNA) and 30 different proteins. The 39S large subunit contains a 16S rRNA (16S mt-rRNA), a copy of mitochondrial valine transfer RNA (mt-tRNA(Val)), which plays an integral structural role, and 52 different proteins.

Its subcellular location is the mitochondrion. Its function is as follows. Required for mitoribosome formation and stability, and mitochondrial translation. The protein is Small ribosomal subunit protein uS2m (MRPS2) of Homo sapiens (Human).